Consider the following 936-residue polypeptide: Protocadherin alpha-5 (936 aa).

The first 28 residues, 1–28 (MVYSRRGSLGSRLLLLWLLLAYWKAGSG), serve as a signal peptide directing secretion. Topologically, residues 29–696 (QLHYSIPEEA…GPEAALVDVN (668 aa)) are extracellular. Cadherin domains are found at residues 33-132 (SIPE…PPRF), 156-241 (ASDL…APEF), 242-349 (DKSI…TPEM), 350-454 (AITT…LRAF), 455-564 (AQPQ…APAL), and 580-677 (VPRS…APKA). Asparagine 264, asparagine 448, and asparagine 547 each carry an N-linked (GlcNAc...) asparagine glycan. Residues 697 to 717 (VYLIIAICAVSSLLVLTLLLY) form a helical membrane-spanning segment. Residues 718-936 (TALRCSAQPT…GNSTTDNSDQ (219 aa)) lie on the Cytoplasmic side of the membrane. 3 disordered regions span residues 759–793 (SGEA…PDWR), 815–875 (RAGP…DKFI), and 887–936 (QEPA…NSDQ). PXXP repeat units follow at residues 773 to 776 (PSLP), 785 to 788 (PRQP), 818 to 821 (PGGP), 873 to 876 (KFII), and 877 to 890 (PGSP…QEPA). The tract at residues 773-890 (PSLPQGPTST…AIISIRQEPA (118 aa)) is 5 X 4 AA repeats of P-X-X-P. Polar residues predominate over residues 774–786 (SLPQGPTSTDNPR). The span at 895–909 (DKSDFITFGKKEETK) shows a compositional bias: basic and acidic residues.

It is found in the cell membrane. In terms of biological role, potential calcium-dependent cell-adhesion protein. May be involved in the establishment and maintenance of specific neuronal connections in the brain. The chain is Protocadherin alpha-5 (PCDHA5) from Pan troglodytes (Chimpanzee).